Here is a 2541-residue protein sequence, read N- to C-terminus: Talin-1 (2541 aa).

The FERM domain maps to 86–403 (RPLKIRMLDG…GYIDIILKKK (318 aa)). Thr-167 is subject to Phosphothreonine. Residues 280–435 (FQAHKNCGQM…PKKSTVLQQQ (156 aa)) form an interaction with LAYN region. 5 positions are modified to phosphoserine: Ser-405, Ser-425, Ser-446, Ser-620, and Ser-729. The tract at residues 482–655 (RGHMPPLTSA…QASGELLQQI (174 aa)) is helical bundle R1. The interval 656 to 786 (GESDTDPHFQ…ALNELLQHVK (131 aa)) is helical bundle R2. The helical bundle R3 stretch occupies residues 787-911 (AHATGAGPAG…NAAAQNAIKK (125 aa)). The segment at 913-1044 (LVQRLEHAAK…RTAAQKAQEA (132 aa)) is helical bundle R4. The residue at position 1021 (Ser-1021) is a Phosphoserine. Positions 1046-1206 (GPLEMDSALS…NRCVSCLPGQ (161 aa)) are helical bundle R5. Phosphotyrosine is present on Tyr-1116. Phosphothreonine is present on Thr-1142. 2 positions are modified to phosphoserine: Ser-1201 and Ser-1225. The interval 1207-1357 (RDVDNALRAV…QLITMCTQQA (151 aa)) is helical bundle R6. Thr-1263 is modified (phosphothreonine). Position 1323 is a phosphoserine (Ser-1323). Residues 1327-1948 (AAPNLKSQLA…CSPSDAYTKK (622 aa)) are interaction with SYNM. Residues 1358–1453 (PGQKECDNAL…AYLVGVSDPN (96 aa)) are helical bundle R7A. The segment at 1359–1659 (GQKECDNALR…SMRDKAPGQL (301 aa)) is interaction with VCL and F-actin. Residues 1461 to 1580 (LVEPTQFARA…NLSAFASNPE (120 aa)) form a helical bundle R8 region. Lys-1544 is modified (N6-acetyllysine). The segment at 1581–1653 (FSSIPAQISP…IKKLITSMRD (73 aa)) is helical bundle R7B. The tract at residues 1655–1822 (APGQLECETA…TLNEAASAAG (168 aa)) is helical bundle R9. The interval 1823-1973 (VVGGMVDSIT…VLAALQAGNR (151 aa)) is helical bundle R10. A Phosphoserine modification is found at Ser-1849. Thr-1855 carries the post-translational modification Phosphothreonine. Position 1878 is a phosphoserine (Ser-1878). Positions 1974–2140 (GTQACITAAS…TVKAVEDEAT (167 aa)) are helical bundle R11. Lys-2031 is modified (N6-acetyllysine). At Ser-2040 the chain carries Phosphoserine. Lys-2115 carries the N6-acetyllysine modification. Residues 2141–2294 (KGTRALEATT…QAAEAMKGTE (154 aa)) are helical bundle R12. The region spanning 2293 to 2533 (TEWVDPEDPT…QIRQQQYKFL (241 aa)) is the I/LWEQ domain. The interval 2300–2482 (DPTVIAENEL…AAQKAAAFEE (183 aa)) is helical bundle R13.

In terms of assembly, part of a complex composed of THSD1, PTK2/FAK1, TLN1 and VCL. Interacts with THSD1; this promotes interaction with PTK2/FAK1 and VCL. Binds with high affinity to VCL and with low affinity to integrins. Interacts with APBB1IP; this inhibits VCL binding. Interacts with PTK2/FAK1. Interacts with PIP5K1C and NRAP. Interacts with LAYN. Interacts with SYNM. Interacts with ITGB1; the interaction is prevented by competitive binding of ITGB1BP1. Interacts with SVEP1. Interacts (via R7 domain) with KANK1 or KANK2 (via KN motif); this interaction likely initiates the assembly of cortical microtubule stabilization complexes (CMSCs) at the vicinity of focal adhesions. As to quaternary structure, interacts with VCL; shows reduced VCL binding compared to isoform 2. Interacts with APBB1IP; shows similar level of binding compared to isoform 2. Interacts with VCL; shows enhanced VCL binding compared to isoform 1. Interacts with APBB1IP; shows similar level of binding compared to isoform 1. In terms of assembly, (Microbial infection) Interacts with human cytomegalovirus protein UL135. As to expression, expressed at low to non-detectable levels in many tissues but highly expressed in skin and pancreas with other tissues including kidney cortex, endocervix, testis, pituitary, liver, and spleen also showing robust expression.

It is found in the cell projection. The protein localises to the ruffle membrane. Its subcellular location is the cytoplasm. The protein resides in the cytoskeleton. It localises to the cell surface. It is found in the cell junction. The protein localises to the focal adhesion. High molecular weight cytoskeletal protein concentrated at regions of cell-matrix and cell-cell contacts. Involved in connections of major cytoskeletal structures to the plasma membrane. With KANK1 co-organize the assembly of cortical microtubule stabilizing complexes (CMSCs) positioned to control microtubule-actin crosstalk at focal adhesions (FAs) rims. This is Talin-1 (TLN1) from Homo sapiens (Human).